A 382-amino-acid polypeptide reads, in one-letter code: uncharacterized protein (382 aa).

12 helical membrane-spanning segments follow: residues 8 to 28, 45 to 65, 75 to 95, 102 to 122, 131 to 151, 157 to 177, 204 to 224, 231 to 251, 270 to 290, 291 to 311, 325 to 345, and 349 to 369; these read VMLL…LNTL, MVSS…GYLI, YLAS…VGFW, FIAG…LMCS, LLAA…LLVS, LLHV…PLLF, LGVN…GLMP, GMAN…GILG, VQVF…AMAP, ALFI…AWAC, ALLL…AMLM, and SDNL…LMLL.

The protein belongs to the major facilitator superfamily. YcaD (TC 2.A.1.26) family.

It localises to the cell inner membrane. This is an uncharacterized protein from Salmonella agona (strain SL483).